The primary structure comprises 448 residues: Pentatricopeptide repeat-containing protein At1g80550, mitochondrial (448 aa).

Residues 1–21 constitute a mitochondrion transit peptide; it reads MLLLRRLNRVRIASPYSVRLL. PPR repeat units follow at residues 80-110, 116-146, 150-186, 188-222, 223-257, 258-292, 293-327, 331-359, 360-394, and 395-429; these read TTETFNRVIDILGKYFEFEISWALINRMIGN, NHVTFRIVFKRYVTAHLVQEAIDAYDKLDDF, DETSFYNLVDALCEHKHVVEAEELCFGKNVIGNGFSV, NTKIHNLILRGWSKLGWWGKCKEYWKKMDTEGVTK, DLFSYSIYMDIMCKSGKPWKAVKLYKEMKSRRMKL, DVVAYNTVIRAIGASQGVEFGIRVFREMRERGCEP, NVATHNTIIKLLCEDGRMRDAYRMLDEMPKRGCQP, TYMCLFSRLEKPSEILSLFGRMIRSGVRP, KMDTYVMLMRKFERWGFLQPVLYVWKTMKESGDTP, and DSAAYNAVIDALIQKGMLDMAREYEEEMIERGLSP.

Belongs to the PPR family. P subfamily.

It localises to the mitochondrion. This is Pentatricopeptide repeat-containing protein At1g80550, mitochondrial from Arabidopsis thaliana (Mouse-ear cress).